The following is a 473-amino-acid chain: Endoglucanase B (473 aa).

Residues 1–17 (MKFLNTFSLLSLAIIGS) form the signal peptide. The tract at residues 18 to 367 (KAMKNISSKE…GLIKGLGNSI (350 aa)) is catalytic. Catalysis depends on E173, which acts as the Proton donor. E295 functions as the Nucleophile in the catalytic mechanism. Residues 365–387 (NSIKTRTTIRRTTTTTTSQSQPT) form a linker region. 2 consecutive CBM10 domains span residues 391 to 427 (SCFSVNLGYSCCNGCEVEYTDSDGEWGVENGNWCGIK) and 436 to 473 (ICWSEKLGYPCCQNTSSVVYTDNDGKWGVENGNWCGIY).

This sequence belongs to the glycosyl hydrolase 5 (cellulase A) family.

It catalyses the reaction Endohydrolysis of (1-&gt;4)-beta-D-glucosidic linkages in cellulose, lichenin and cereal beta-D-glucans.. In terms of biological role, rate of hydrolysis of cellulo-oligosaccharides increased with increasing chain length from cellotriose to cellopentaose. The sequence is that of Endoglucanase B (CELB) from Neocallimastix patriciarum (Rumen fungus).